Here is a 255-residue protein sequence, read N- to C-terminus: Ribonuclease PH (255 aa).

Residues Arg86 and 124-126 each bind phosphate; that span reads GTR.

Belongs to the RNase PH family. Homohexameric ring arranged as a trimer of dimers.

It catalyses the reaction tRNA(n+1) + phosphate = tRNA(n) + a ribonucleoside 5'-diphosphate. Phosphorolytic 3'-5' exoribonuclease that plays an important role in tRNA 3'-end maturation. Removes nucleotide residues following the 3'-CCA terminus of tRNAs; can also add nucleotides to the ends of RNA molecules by using nucleoside diphosphates as substrates, but this may not be physiologically important. Probably plays a role in initiation of 16S rRNA degradation (leading to ribosome degradation) during starvation. This Hydrogenobaculum sp. (strain Y04AAS1) protein is Ribonuclease PH.